The following is a 917-amino-acid chain: Coiled-coil domain-containing protein 186 (917 aa).

Disordered stretches follow at residues 1 to 52 (MKIR…SGDE), 97 to 118 (SCAN…PGGD), and 701 to 769 (TQRR…SVAV). A compositionally biased stretch (basic and acidic residues) spans 33–44 (TTEKTSELRDDS). Residues 220-736 (RYLQQELTVK…TENGNHDKDI (517 aa)) are a coiled coil. Residues 722–736 (RKLEQTENGNHDKDI) show a composition bias toward basic and acidic residues. A compositionally biased stretch (low complexity) spans 737 to 748 (SSMGSRSSSSGS). At S759 the chain carries Phosphoserine. Coiled coils occupy residues 778–822 (AMLI…IQSY) and 874–913 (KLQA…LEQR).

In terms of tissue distribution, expressed in postnatal germ cells.

The sequence is that of Coiled-coil domain-containing protein 186 (Ccdc186) from Mus musculus (Mouse).